Consider the following 492-residue polypeptide: 3-octaprenyl-4-hydroxybenzoate carboxy-lyase (492 aa).

N172 lines the Mn(2+) pocket. Residues 175-177, 189-191, and 194-195 contribute to the prenylated FMN site; these read IYR, RWL, and RG. E238 is a binding site for Mn(2+). D287 serves as the catalytic Proton donor.

It belongs to the UbiD family. Homohexamer. Requires prenylated FMN as cofactor. Mn(2+) is required as a cofactor.

It localises to the cell membrane. The enzyme catalyses a 4-hydroxy-3-(all-trans-polyprenyl)benzoate + H(+) = a 2-(all-trans-polyprenyl)phenol + CO2. The protein operates within cofactor biosynthesis; ubiquinone biosynthesis. Its function is as follows. Catalyzes the decarboxylation of 3-octaprenyl-4-hydroxy benzoate to 2-octaprenylphenol, an intermediate step in ubiquinone biosynthesis. This chain is 3-octaprenyl-4-hydroxybenzoate carboxy-lyase, found in Pasteurella multocida (strain Pm70).